A 185-amino-acid chain; its full sequence is MKKQLFWAPQNEIPSTLWTANERSWLTHPGSLTQRLRKTTDGQIQHHLLREVFDAPVDEETQLLGISQPELALIREIEWRYFESLWVAGRVVIPKKTLEREGSPLNHIGERSLGDILFANAKFTRGDLEFRQITADHPYYFYVKEIANGSCIWARRSLFYFERDPLLVSEIFSPALFLESSVSND.

Substrate contacts are provided by R75, L113, and E170.

It belongs to the UbiC family.

The protein resides in the cytoplasm. The enzyme catalyses chorismate = 4-hydroxybenzoate + pyruvate. It participates in cofactor biosynthesis; ubiquinone biosynthesis. Its function is as follows. Removes the pyruvyl group from chorismate, with concomitant aromatization of the ring, to provide 4-hydroxybenzoate (4HB) for the ubiquinone pathway. The polypeptide is Probable chorismate pyruvate-lyase (Coxiella burnetii (strain RSA 493 / Nine Mile phase I)).